Reading from the N-terminus, the 356-residue chain is Biotin synthase (356 aa).

Positions 1–28 (MTIQANVPTGDETSDEASRQTSNEASSE) are disordered. The region spanning 77–302 (EDVEVEGIIS…RTVLRYAGGR (226 aa)) is the Radical SAM core domain. [4Fe-4S] cluster contacts are provided by cysteine 92, cysteine 96, and cysteine 99. Positions 135, 168, 227, and 297 each coordinate [2Fe-2S] cluster.

Belongs to the radical SAM superfamily. Biotin synthase family. In terms of assembly, homodimer. [4Fe-4S] cluster is required as a cofactor. Requires [2Fe-2S] cluster as cofactor.

It carries out the reaction (4R,5S)-dethiobiotin + (sulfur carrier)-SH + 2 reduced [2Fe-2S]-[ferredoxin] + 2 S-adenosyl-L-methionine = (sulfur carrier)-H + biotin + 2 5'-deoxyadenosine + 2 L-methionine + 2 oxidized [2Fe-2S]-[ferredoxin]. Its pathway is cofactor biosynthesis; biotin biosynthesis; biotin from 7,8-diaminononanoate: step 2/2. Functionally, catalyzes the conversion of dethiobiotin (DTB) to biotin by the insertion of a sulfur atom into dethiobiotin via a radical-based mechanism. The polypeptide is Biotin synthase (Arthrobacter sp. (strain FB24)).